The primary structure comprises 441 residues: 4-hydroxybenzoate polyprenyltransferase, mitochondrial (441 aa).

The transit peptide at 1-95 (MLRKLTSNSS…TLGELVLRDY (95 aa)) directs the protein to the mitochondrion. Transmembrane regions (helical) follow at residues 129–149 (IGSW…APAG), 154–174 (LWTL…GCTI), 204–224 (AWFF…ELNW), 225–245 (YSIV…LMKR), 246–266 (ITHW…LLGW), 271–291 (GSVM…WTIV), 322–342 (LWLS…GMVC), and 378–398 (FISN…GTLY). Residues 405–441 (AGKSSTTSSSSTSSSSSPSSGLLLAATNHHQPARQAS) are disordered. Over residues 408–424 (SSTTSSSSTSSSSSPSS) the composition is skewed to low complexity. Residues 432 to 441 (NHHQPARQAS) are compositionally biased toward polar residues.

The protein belongs to the UbiA prenyltransferase family. The cofactor is Mg(2+).

The protein resides in the mitochondrion inner membrane. It carries out the reaction an all-trans-polyprenyl diphosphate + 4-hydroxybenzoate = a 4-hydroxy-3-(all-trans-polyprenyl)benzoate + diphosphate. It participates in cofactor biosynthesis; ubiquinone biosynthesis. Its function is as follows. Catalyzes the prenylation of para-hydroxybenzoate (PHB) with an all-trans polyprenyl group. Mediates the second step in the final reaction sequence of coenzyme Q (CoQ) biosynthesis, which is the condensation of the polyisoprenoid side chain with PHB, generating the first membrane-bound Q intermediate. This is 4-hydroxybenzoate polyprenyltransferase, mitochondrial from Aedes aegypti (Yellowfever mosquito).